The chain runs to 808 residues: Enhancer of polycomb homolog 2 (808 aa).

Glycyl lysine isopeptide (Lys-Gly) (interchain with G-Cter in SUMO2) cross-links involve residues Lys135, Lys195, and Lys324. Residues 337–357 (YPKKPKAEAGIAPQQPTPETL) are disordered. Residue Lys362 forms a Glycyl lysine isopeptide (Lys-Gly) (interchain with G-Cter in SUMO2) linkage. 3 disordered regions span residues 371–397 (QSSD…PDGS), 595–630 (QRQQ…CMSK), and 645–682 (VSAP…LYST). Residues 595–614 (QRQQLAQLHQKQQSQHSSQQ) are compositionally biased toward low complexity. 2 stretches are compositionally biased toward polar residues: residues 615-630 (THPK…CMSK) and 658-682 (EQNT…LYST). Ser755 is subject to Phosphoserine.

The protein belongs to the enhancer of polycomb family.

The protein localises to the nucleus. Its function is as follows. May play a role in transcription or DNA repair. The chain is Enhancer of polycomb homolog 2 (Epc2) from Mus musculus (Mouse).